The sequence spans 185 residues: Peptidyl-tRNA hydrolase (185 aa).

TRNA is bound at residue Y14. The active-site Proton acceptor is the H19. TRNA-binding residues include Y64, N66, and N112.

This sequence belongs to the PTH family. In terms of assembly, monomer.

The protein resides in the cytoplasm. It catalyses the reaction an N-acyl-L-alpha-aminoacyl-tRNA + H2O = an N-acyl-L-amino acid + a tRNA + H(+). Its function is as follows. Hydrolyzes ribosome-free peptidyl-tRNAs (with 1 or more amino acids incorporated), which drop off the ribosome during protein synthesis, or as a result of ribosome stalling. Catalyzes the release of premature peptidyl moieties from peptidyl-tRNA molecules trapped in stalled 50S ribosomal subunits, and thus maintains levels of free tRNAs and 50S ribosomes. This is Peptidyl-tRNA hydrolase from Lactobacillus delbrueckii subsp. bulgaricus (strain ATCC 11842 / DSM 20081 / BCRC 10696 / JCM 1002 / NBRC 13953 / NCIMB 11778 / NCTC 12712 / WDCM 00102 / Lb 14).